Here is a 212-residue protein sequence, read N- to C-terminus: MGIITKIEQQKRNDDRVNIYVDDKFFIAIFKELVYTFNLKKGNEINEEELKPILDDEMYIKAKNKALNILSHADQSEKKLKEKLSSEFDENIIERVIDFLKSYNLVNDSVLAQKIVNTNVNLNKCGKNRIKQNLYNKGINRSTINEAVSELDKDTEFENAMYLAKKRYERVKKEDKKKIYQKISQHLSYKGFDYDIIKRVLNKLLNFDEYDI.

Belongs to the RecX family.

It is found in the cytoplasm. Functionally, modulates RecA activity. The polypeptide is Regulatory protein RecX (Clostridioides difficile (strain 630) (Peptoclostridium difficile)).